The primary structure comprises 305 residues: UDP-3-O-acyl-N-acetylglucosamine deacetylase (305 aa).

The Zn(2+) site is built by histidine 79, histidine 238, and aspartate 242. Histidine 265 (proton donor) is an active-site residue.

It belongs to the LpxC family. Zn(2+) is required as a cofactor.

The catalysed reaction is a UDP-3-O-[(3R)-3-hydroxyacyl]-N-acetyl-alpha-D-glucosamine + H2O = a UDP-3-O-[(3R)-3-hydroxyacyl]-alpha-D-glucosamine + acetate. Its pathway is glycolipid biosynthesis; lipid IV(A) biosynthesis; lipid IV(A) from (3R)-3-hydroxytetradecanoyl-[acyl-carrier-protein] and UDP-N-acetyl-alpha-D-glucosamine: step 2/6. Catalyzes the hydrolysis of UDP-3-O-myristoyl-N-acetylglucosamine to form UDP-3-O-myristoylglucosamine and acetate, the committed step in lipid A biosynthesis. This is UDP-3-O-acyl-N-acetylglucosamine deacetylase from Pasteurella multocida (strain Pm70).